The sequence spans 207 residues: dTTP/UTP pyrophosphatase (207 aa).

Aspartate 87 functions as the Proton acceptor in the catalytic mechanism.

The protein belongs to the Maf family. YhdE subfamily. Requires a divalent metal cation as cofactor.

The protein localises to the cytoplasm. The enzyme catalyses dTTP + H2O = dTMP + diphosphate + H(+). The catalysed reaction is UTP + H2O = UMP + diphosphate + H(+). Functionally, nucleoside triphosphate pyrophosphatase that hydrolyzes dTTP and UTP. May have a dual role in cell division arrest and in preventing the incorporation of modified nucleotides into cellular nucleic acids. The sequence is that of dTTP/UTP pyrophosphatase from Ralstonia nicotianae (strain ATCC BAA-1114 / GMI1000) (Ralstonia solanacearum).